Consider the following 383-residue polypeptide: S-adenosylmethionine synthase 1 (383 aa).

Residue His-15 participates in ATP binding. Asp-17 lines the Mg(2+) pocket. Glu-43 provides a ligand contact to K(+). Glu-56 and Gln-99 together coordinate L-methionine. The segment at Gln-99 to Arg-109 is flexible loop. Residues Asp-162 to Lys-164, Arg-228 to Phe-229, Asp-237, Arg-243 to Lys-244, Ala-260, and Lys-264 each bind ATP. Asp-237 is an L-methionine binding site. Lys-268 lines the L-methionine pocket.

This sequence belongs to the AdoMet synthase family. As to quaternary structure, homotetramer; dimer of dimers. Requires Mg(2+) as cofactor. It depends on K(+) as a cofactor.

It localises to the cytoplasm. The enzyme catalyses L-methionine + ATP + H2O = S-adenosyl-L-methionine + phosphate + diphosphate. The protein operates within amino-acid biosynthesis; S-adenosyl-L-methionine biosynthesis; S-adenosyl-L-methionine from L-methionine: step 1/1. Its function is as follows. Catalyzes the formation of S-adenosylmethionine (AdoMet) from methionine and ATP. The overall synthetic reaction is composed of two sequential steps, AdoMet formation and the subsequent tripolyphosphate hydrolysis which occurs prior to release of AdoMet from the enzyme. This chain is S-adenosylmethionine synthase 1, found in Rhodospirillum rubrum (strain ATCC 11170 / ATH 1.1.1 / DSM 467 / LMG 4362 / NCIMB 8255 / S1).